Consider the following 291-residue polypeptide: MSCQAFTSADTFIPLNSDASATLPLIMHHSAAECLPVSNHATNVMSTATGLHYSVPSCHYGNQPSTYGVMAGSLTPCLYKFPDHTLSHGFPPIHQPLLAEDPTAADFKQELRRKSKLVEEPIDMDSPEIRELEKFANEFKVRRIKLGYTQTNVGEALAAVHGSEFSQTTICRFENLQLSFKNACKLKAILSKWLEEAEQVGALYNEKVGANERKRKRRTTISIAAKDALERHFGEQNKPSSQEIMRMAEELNLEKEVVRVWFCNRRQREKRVKTSLNQSLFSISKEHLECR.

Residues 5–13 carry the 9aaTAD motif; that stretch reads AFTSADTFI. Residues 124–198 enclose the POU-specific domain; the sequence is MDSPEIRELE…ILSKWLEEAE (75 aa). The homeobox DNA-binding region spans 214–273; it reads KRKRRTTISIAAKDALERHFGEQNKPSSQEIMRMAEELNLEKEVVRVWFCNRRQREKRVK.

Belongs to the POU transcription factor family. Class-1 subfamily. Interacts with PITX1. Interacts with LHX3. Interacts with ELK1.

The protein resides in the nucleus. In terms of biological role, transcription factor involved in the specification of the lactotrope, somatotrope, and thyrotrope phenotypes in the developing anterior pituitary. Specifically binds to the consensus sequence 5'-TAAAT-3'. Activates growth hormone and prolactin genes. The polypeptide is Pituitary-specific positive transcription factor 1 (POU1F1) (Homo sapiens (Human)).